The sequence spans 263 residues: Hydroxyacylglutathione hydrolase (263 aa).

The Zn(2+) site is built by H56, H58, D60, H61, H115, D135, and H175.

Belongs to the metallo-beta-lactamase superfamily. Glyoxalase II family. Monomer. It depends on Zn(2+) as a cofactor.

The enzyme catalyses an S-(2-hydroxyacyl)glutathione + H2O = a 2-hydroxy carboxylate + glutathione + H(+). The protein operates within secondary metabolite metabolism; methylglyoxal degradation; (R)-lactate from methylglyoxal: step 2/2. Its function is as follows. Thiolesterase that catalyzes the hydrolysis of S-D-lactoyl-glutathione to form glutathione and D-lactic acid. In Nitrosococcus oceani (strain ATCC 19707 / BCRC 17464 / JCM 30415 / NCIMB 11848 / C-107), this protein is Hydroxyacylglutathione hydrolase.